The chain runs to 1213 residues: SWI/SNF complex subunit SMARCC2 (1213 aa).

A marR-like, BRCT and chromo domains module region spans residues 1–274; the sequence is MAVRKKDGGP…PVSRRKKISA (274 aa). The MarR-like domain occupies 10–136; sequence PNVKYYEAAD…IEKSLVQNNC (127 aa). A BRCT; N-terminus domain is found at 140 to 183; the sequence is PNIFLCPEIEPKLLGKLKDIVKRHQGTISEDKSNASHVVYPVPG. The 29-residue stretch at 189-217 folds into the Chromo domain; the sequence is EWVRPVMKRDKQVLLHWGYYPDSYDTWIP. The BRCT; C-terminus domain occupies 233–257; that stretch reads KPRKVHAKWILDTDTFNEWMNEEDY. The segment at 256 to 413 is disordered; the sequence is DYEVSDDKSP…GEQTKNPDLH (158 aa). Positions 275-284 are enriched in polar residues; that stretch reads KTLTDEVNSP. 5 positions are modified to phosphoserine: S283, S286, S302, S304, and S306. K312 carries the post-translational modification N6-(ADP-ribosyl)lysine. K326 is subject to N6-acetyllysine. The span at 331–344 shows a compositional bias: basic and acidic residues; the sequence is HREEEQEDLTKDMD. Phosphoserine is present on residues S347 and S387. Residues 379 to 398 show a composition bias toward acidic residues; that stretch reads DLDEQDDESMETTGKDEDEN. In terms of domain architecture, SWIRM spans 424–521; sequence IIIPSYAAWF…YQVDAESRPT (98 aa). Residues K564, K566, K568, and K592 each participate in a glycyl lysine isopeptide (Lys-Gly) (interchain with G-Cter in SUMO2) cross-link. An SANT domain is found at 596–647; it reads SATREWTEQETLLLLEALEMYKDDWNKVSEHVGSRTQDECILHFLRLPIEDP. A Glycyl lysine isopeptide (Lys-Gly) (interchain with G-Cter in SUMO2) cross-link involves residue K704. The interval 724–848 is disordered; sequence KVTGKADPAF…AEPEGERKTK (125 aa). The span at 747–777 shows a compositional bias: basic and acidic residues; sequence EPERIEESGTEEARPEGQAADEKKEPKEPRE. A Glycyl lysine isopeptide (Lys-Gly) (interchain with G-Cter in SUMO2) cross-link involves residue K787. Positions 788–848 are enriched in basic and acidic residues; that stretch reads EEISEVPKKD…AEPEGERKTK (61 aa). S813 is subject to Phosphoserine. A Glycyl lysine isopeptide (Lys-Gly) (interchain with G-Cter in SUMO2) cross-link involves residue K848. Positions 907-934 form a coiled coil; the sequence is EELETIMDREREALEYQRQQLLADRQAF. Disordered stretches follow at residues 947–1073 and 1181–1213; these read RQQH…HPGV and LPSA…PPPQ. Residues 949–962 show a composition bias toward low complexity; that stretch reads QHFQQMHQQQQQQP. Residues 963 to 974 show a composition bias toward pro residues; the sequence is PTLPPGSQPIPP. Residues 975-1033 show a composition bias toward low complexity; the sequence is TGAAGPPTVHGLAVPPAAVASAPPGSGAPPGSLGPSEQIGQAGTTAGPQQPQQAGAPQP. 2 stretches are compositionally biased toward pro residues: residues 1034–1060 and 1185–1201; these read GAVP…PPSM and SPLP…PTAP.

It belongs to the SMARCC family. Component of the multiprotein chromatin-remodeling complexes SWI/SNF: SWI/SNF-A (BAF), SWI/SNF-B (PBAF) and related complexes. The canonical complex contains a catalytic subunit (either SMARCA4/BRG1/BAF190A or SMARCA2/BRM/BAF190B) and at least SMARCE1, ACTL6A/BAF53, SMARCC1/BAF155, SMARCC2/BAF170, and SMARCB1/SNF5/BAF47. Other subunits specific to each of the complexes may also be present permitting several possible combinations developmentally and tissue specific. Component of the BAF complex, which includes at least actin (ACTB), ARID1A/BAF250A, ARID1B/BAF250B, SMARCA2/BRM, SMARCA4/BRG1, ACTL6A/BAF53, ACTL6B/BAF53B, SMARCE1/BAF57, SMARCC1/BAF155, SMARCC2/BAF170, SMARCB1/SNF5/INI1, and one or more SMARCD1/BAF60A, SMARCD2/BAF60B, or SMARCD3/BAF60C. In muscle cells, the BAF complex also contains DPF3. Component of neural progenitors-specific chromatin remodeling complex (npBAF complex) composed of at least, ARID1A/BAF250A or ARID1B/BAF250B, SMARCD1/BAF60A, SMARCD3/BAF60C, SMARCA2/BRM/BAF190B, SMARCA4/BRG1/BAF190A, SMARCB1/BAF47, SMARCC1/BAF155, SMARCE1/BAF57, SMARCC2/BAF170, PHF10/BAF45A, ACTL6A/BAF53A and actin. Component of neuron-specific chromatin remodeling complex (nBAF complex) composed of at least, ARID1A/BAF250A or ARID1B/BAF250B, SMARCD1/BAF60A, SMARCD3/BAF60C, SMARCA2/BRM/BAF190B, SMARCA4/BRG1/BAF190A, SMARCB1/BAF47, SMARCC1/BAF155, SMARCE1/BAF57, SMARCC2/BAF170, DPF1/BAF45B, DPF3/BAF45C, ACTL6B/BAF53B and actin. Component of the SWI/SNF-B (PBAF) chromatin remodeling complex, at least composed of SMARCA4/BRG1, SMARCB1/BAF47/SNF5, ACTL6A/BAF53A or ACTL6B/BAF53B, SMARCE1/BAF57, SMARCD1/BAF60A, SMARCD2/BAF60B, perhaps SMARCD3/BAF60C, SMARCC1/BAF155, SMARCC2/BAF170, PBRM1/BAF180, ARID2/BAF200 and actin. May also interact with the SIN3A histone deacetylase transcription repressor complex in conjunction with SMARCA2 and SMARCA4. Interacts with SMARD1. Interacts with KDM6B. Interaction with RCOR1. Interacts with DPF2. Interacts with ERCC6. Interacts with FOS. Post-translationally, mono-ADP-ribosylation at Lys-312 by SIRT6 promotes recruitment to the enhancer region of the Heme oxygenase-1 (HO-1) locus, leading to transcription activation of the locus.

It is found in the nucleus. Its function is as follows. Involved in transcriptional activation and repression of select genes by chromatin remodeling (alteration of DNA-nucleosome topology). Component of SWI/SNF chromatin remodeling complexes that carry out key enzymatic activities, changing chromatin structure by altering DNA-histone contacts within a nucleosome in an ATP-dependent manner. Can stimulate the ATPase activity of the catalytic subunit of these complexes. May be required for CoREST dependent repression of neuronal specific gene promoters in non-neuronal cells. Belongs to the neural progenitors-specific chromatin remodeling complex (npBAF complex) and the neuron-specific chromatin remodeling complex (nBAF complex). During neural development a switch from a stem/progenitor to a postmitotic chromatin remodeling mechanism occurs as neurons exit the cell cycle and become committed to their adult state. The transition from proliferating neural stem/progenitor cells to postmitotic neurons requires a switch in subunit composition of the npBAF and nBAF complexes. As neural progenitors exit mitosis and differentiate into neurons, npBAF complexes which contain ACTL6A/BAF53A and PHF10/BAF45A, are exchanged for homologous alternative ACTL6B/BAF53B and DPF1/BAF45B or DPF3/BAF45C subunits in neuron-specific complexes (nBAF). The npBAF complex is essential for the self-renewal/proliferative capacity of the multipotent neural stem cells. The nBAF complex along with CREST plays a role regulating the activity of genes essential for dendrite growth. Critical regulator of myeloid differentiation, controlling granulocytopoiesis and the expression of genes involved in neutrophil granule formation. This is SWI/SNF complex subunit SMARCC2 (Smarcc2) from Mus musculus (Mouse).